A 441-amino-acid chain; its full sequence is Interferon-related developmental regulator 2 (441 aa).

Over residues 1–15 the composition is skewed to basic residues; it reads MPRARKGNTPRKGGQ. The interval 1–72 is disordered; sequence MPRARKGNTP…TVDEQGPQED (72 aa). The span at 63 to 72 shows a compositional bias: acidic residues; that stretch reads TVDEQGPQED.

The protein belongs to the IFRD family. In terms of assembly, associates with ribosomes; promoting ribosome inactivation.

In terms of biological role, ribosome-binding protein that acts as an inhibitor of mRNA translation by promoting ribosome inactivation. Associates with the P- and E-sites of the ribosome and inserts a C-terminal helix into the mRNA exit channel to preclude translation. The polypeptide is Interferon-related developmental regulator 2 (Oryctolagus cuniculus (Rabbit)).